A 250-amino-acid chain; its full sequence is Indole-3-glycerol phosphate synthase (250 aa).

This sequence belongs to the TrpC family.

The enzyme catalyses 1-(2-carboxyphenylamino)-1-deoxy-D-ribulose 5-phosphate + H(+) = (1S,2R)-1-C-(indol-3-yl)glycerol 3-phosphate + CO2 + H2O. Its pathway is amino-acid biosynthesis; L-tryptophan biosynthesis; L-tryptophan from chorismate: step 4/5. This chain is Indole-3-glycerol phosphate synthase, found in Picrophilus torridus (strain ATCC 700027 / DSM 9790 / JCM 10055 / NBRC 100828 / KAW 2/3).